A 128-amino-acid polypeptide reads, in one-letter code: Small ribosomal subunit protein uS11 (128 aa).

Belongs to the universal ribosomal protein uS11 family. As to quaternary structure, part of the 30S ribosomal subunit. Interacts with proteins S7 and S18. Binds to IF-3.

In terms of biological role, located on the platform of the 30S subunit, it bridges several disparate RNA helices of the 16S rRNA. Forms part of the Shine-Dalgarno cleft in the 70S ribosome. In Chromohalobacter salexigens (strain ATCC BAA-138 / DSM 3043 / CIP 106854 / NCIMB 13768 / 1H11), this protein is Small ribosomal subunit protein uS11.